A 206-amino-acid chain; its full sequence is 2,3-bisphosphoglycerate-dependent phosphoglycerate mutase (206 aa).

Substrate-binding positions include 9 to 16 (RHGQSEWN), 22 to 23 (TG), arginine 61, 88 to 91 (ERDY), lysine 99, 115 to 116 (RR), and 159 to 160 (GN). Catalysis depends on histidine 10, which acts as the Tele-phosphohistidine intermediate. The Proton donor/acceptor role is filled by glutamate 88.

The protein belongs to the phosphoglycerate mutase family. BPG-dependent PGAM subfamily. Homodimer.

It catalyses the reaction (2R)-2-phosphoglycerate = (2R)-3-phosphoglycerate. It functions in the pathway carbohydrate degradation; glycolysis; pyruvate from D-glyceraldehyde 3-phosphate: step 3/5. Catalyzes the interconversion of 2-phosphoglycerate and 3-phosphoglycerate. The chain is 2,3-bisphosphoglycerate-dependent phosphoglycerate mutase from Methylocella silvestris (strain DSM 15510 / CIP 108128 / LMG 27833 / NCIMB 13906 / BL2).